Consider the following 249-residue polypeptide: tRNA pseudouridine synthase A (249 aa).

The active-site Nucleophile is aspartate 53. Tyrosine 111 is a binding site for substrate.

The protein belongs to the tRNA pseudouridine synthase TruA family. As to quaternary structure, homodimer.

The enzyme catalyses uridine(38/39/40) in tRNA = pseudouridine(38/39/40) in tRNA. Functionally, formation of pseudouridine at positions 38, 39 and 40 in the anticodon stem and loop of transfer RNAs. This chain is tRNA pseudouridine synthase A, found in Streptococcus pyogenes serotype M3 (strain ATCC BAA-595 / MGAS315).